The chain runs to 513 residues: ATP synthase subunit alpha (513 aa).

171-178 (GDRQIGKT) serves as a coordination point for ATP.

It belongs to the ATPase alpha/beta chains family. In terms of assembly, F-type ATPases have 2 components, CF(1) - the catalytic core - and CF(0) - the membrane proton channel. CF(1) has five subunits: alpha(3), beta(3), gamma(1), delta(1), epsilon(1). CF(0) has three main subunits: a(1), b(2) and c(9-12). The alpha and beta chains form an alternating ring which encloses part of the gamma chain. CF(1) is attached to CF(0) by a central stalk formed by the gamma and epsilon chains, while a peripheral stalk is formed by the delta and b chains.

The protein localises to the cell membrane. The catalysed reaction is ATP + H2O + 4 H(+)(in) = ADP + phosphate + 5 H(+)(out). Functionally, produces ATP from ADP in the presence of a proton gradient across the membrane. The alpha chain is a regulatory subunit. This Wolbachia pipientis subsp. Culex pipiens (strain wPip) protein is ATP synthase subunit alpha.